The chain runs to 99 residues: UPF0213 protein SP_1535 (99 aa).

The GIY-YIG domain maps to 3–78 (HKAYMYVLEC…KRKKRPQKEE (76 aa)).

Belongs to the UPF0213 family.

The polypeptide is UPF0213 protein SP_1535 (Streptococcus pneumoniae serotype 4 (strain ATCC BAA-334 / TIGR4)).